Consider the following 380-residue polypeptide: Histone deacetylase-like amidohydrolase (380 aa).

Histidine 144 functions as the Proton donor/acceptor in the catalytic mechanism. Residues aspartate 181, histidine 183, and aspartate 269 each contribute to the Zn(2+) site.

It belongs to the histone deacetylase family. In terms of assembly, homotetramer; dimer of head-to-head dimers. Zn(2+) serves as cofactor.

Its activity is regulated as follows. Is inhibited by azobenzenes, stilbenes and arylazopyrazoles. Its function is as follows. Probable protein deacetylase that catalyzes deacetylation of acetylated lysine residues. In vitro, exhibits high activity against artificial HDAC (histone deacetylase) substrates containing acetylated and trifluoroacetylated lysine residues. Is not able to deacetylate acetylated polyamines. The chain is Histone deacetylase-like amidohydrolase from Pseudomonas aeruginosa (strain ATCC 15692 / DSM 22644 / CIP 104116 / JCM 14847 / LMG 12228 / 1C / PRS 101 / PAO1).